We begin with the raw amino-acid sequence, 767 residues long: 5-methyltetrahydropteroyltriglutamate--homocysteine methyltransferase (767 aa).

5-methyltetrahydropteroyltri-L-glutamate is bound by residues Lys19 and Asn126. Residues 446–448 (IGS) and Glu499 contribute to the L-homocysteine site. L-methionine is bound by residues 446 to 448 (IGS) and Glu499. 5-methyltetrahydropteroyltri-L-glutamate-binding positions include Asp504, Tyr527, 530–531 (RY), and Trp576. Asp614 contributes to the L-homocysteine binding site. Asp614 provides a ligand contact to L-methionine. Zn(2+) is bound by residues His657, Cys659, and Glu679. Residue His707 is the Proton donor of the active site. Cys739 provides a ligand contact to Zn(2+).

The protein belongs to the vitamin-B12 independent methionine synthase family. The cofactor is Zn(2+).

The catalysed reaction is 5-methyltetrahydropteroyltri-L-glutamate + L-homocysteine = tetrahydropteroyltri-L-glutamate + L-methionine. Its pathway is amino-acid biosynthesis; L-methionine biosynthesis via de novo pathway; L-methionine from L-homocysteine (MetE route): step 1/1. Its activity is regulated as follows. Inhibited weakly by methotrexate. In terms of biological role, catalyzes the transfer of a methyl group from 5-methyltetrahydrofolate to homocysteine resulting in methionine formation. In Candida albicans (strain SC5314 / ATCC MYA-2876) (Yeast), this protein is 5-methyltetrahydropteroyltriglutamate--homocysteine methyltransferase.